A 906-amino-acid chain; its full sequence is MQDLYMVDSIVSFGVEKLWKLLSQEYERFQGVEEQITELRDDLKMLMAFLSDADAKKQTRALARNCLEEIKEITYDAEDIIEIFLLKGSVNMRSLACFPGGRREIALQITSISKRISKVIQVMQNLGIKSDIMDGVDSHAQLERKRELRHTFSSESESNLVGLEKNVEKLVEELVGNDSSHGVSITGLGGLGKTTLARQIFDHDKVKSHFDGLAWVCVSQEFTRKDVWKTILGNLSPKYKDSDLPEDDIQKKLFQLLETKKALIVFDDLWKREDWYRIAPMFPERKAGWKVLLTSRNDAIHPHCVTFKPELLTHDECWKLLQRIAFSKQKTITGYIIDKEMVKMAKEMTKHCKRLPLAVKLLGGLLDAKHTLRQWKLISENIISHIVVGGTSSNENDSSSVNHVLSLSFEGLPGYLKHCLLYLASYPEDHEIEIERLSYVWAAEGITYPGNYEGATIRDVADLYIEELVKRNMVISERDALTSRFEKCQLHDLMREICLLKAKEENFLQIVTDPTSSSSVHSLASSRSRRLVVYNTSIFSGENDMKNSKLRSLLFIPVGYSRFSMGSNFIELPLLRVLDLDGAKFKGGKLPSSIGKLIHLKYLSLYQASVTYLPSSLRNLKSLLYLNLRINSGQLINVPNVFKEMLELRYLSLPWERSSLTKLELGNLLKLETLINFSTKDSSVTDLHRMTKLRTLQILISGEGLHMETLSSALSMLGHLEDLTVTPSENSVQFKHPKLIYRPMLPDVQHFPSHLTTISLVYCFLEEDPMPTLEKLLQLKVVSLWYNAYVGRRMVCTGGGFPPLHRLEIWGLDALEEWIVEEGSMPLLHTLHIVDCKKLKEIPDGLRFISSLKELAIRTNEKVFQKKVSKGGEDYYKMQHVPLIRYNWPQEPENNEVIYSFPSPII.

Residues 20-59 adopt a coiled-coil conformation; sequence KLLSQEYERFQGVEEQITELRDDLKMLMAFLSDADAKKQT. Residues 138 to 452 form the NB-ARC domain; the sequence is SHAQLERKRE…AEGITYPGNY (315 aa). Position 187 to 194 (187 to 194) interacts with ATP; that stretch reads GLGGLGKT. LRR repeat units lie at residues 572 to 597, 599 to 619, 620 to 644, and 825 to 850; these read LPLL…IGKL, HLKY…SLRN, LKSL…VFKE, and MPLL…RFIS.

The protein belongs to the disease resistance NB-LRR family.

Functionally, potential disease resistance protein. The polypeptide is Putative disease resistance protein At1g59780 (Arabidopsis thaliana (Mouse-ear cress)).